Here is a 190-residue protein sequence, read N- to C-terminus: Segregation and condensation protein B (190 aa).

Belongs to the ScpB family. Homodimer. Homodimerization may be required to stabilize the binding of ScpA to the Smc head domains. Component of a cohesin-like complex composed of ScpA, ScpB and the Smc homodimer, in which ScpA and ScpB bind to the head domain of Smc. The presence of the three proteins is required for the association of the complex with DNA.

It localises to the cytoplasm. Its function is as follows. Participates in chromosomal partition during cell division. May act via the formation of a condensin-like complex containing Smc and ScpA that pull DNA away from mid-cell into both cell halves. The chain is Segregation and condensation protein B from Bacillus cereus (strain ATCC 14579 / DSM 31 / CCUG 7414 / JCM 2152 / NBRC 15305 / NCIMB 9373 / NCTC 2599 / NRRL B-3711).